Here is a 773-residue protein sequence, read N- to C-terminus: Histone-lysine N-methyltransferase mes-2 (773 aa).

Residues 1–13 (MSNSEPSTSTPSG) show a composition bias toward polar residues. The tract at residues 1 to 33 (MSNSEPSTSTPSGKTKKRGKKCETSMGKSKKSK) is disordered. An interaction with mes-6 region spans residues 1–194 (MSNSEPSTST…TPDQLRLTHM (194 aa)). One can recognise a CXC domain in the interval 505–614 (IREDDMRDSQ…SNIIKCRNFG (110 aa)). Residues 616–737 (TRMIQKRTYC…ISEELTFDYS (122 aa)) enclose the SET domain. The interval 749–773 (VQTKERSEKPSRPKSQKLSKPMTSE) is disordered. Positions 750–759 (QTKERSEKPS) are enriched in basic and acidic residues.

The protein belongs to the class V-like SAM-binding methyltransferase superfamily. Histone-lysine methyltransferase family. EZ subfamily. As to quaternary structure, interacts directly with mes-6 via its N-terminal domain. Forms a heterotrimeric complex with mes-3 and mes-6. Does not interact with mes-4. As to expression, in adults, it is predominantly expressed in the germline, and weakly expressed in intestinal cells. Expressed in the hypoderm.

It is found in the nucleus. It carries out the reaction L-lysyl(27)-[histone H3] + 3 S-adenosyl-L-methionine = N(6),N(6),N(6)-trimethyl-L-lysyl(27)-[histone H3] + 3 S-adenosyl-L-homocysteine + 3 H(+). Polycomb group (PcG) protein. Catalytic subunit of a the mes-2/mes-3/mes-6 complex, which methylates 'Lys-27' of histone H3, leading to transcriptional repression of the affected target genes. PcG proteins act by forming multiprotein complexes, which are required to maintain the transcriptionally repressive state of homeotic genes throughout development. In association with the nfya-1-NF-Y complex, may play a role in repressing the expression of the homeobox protein egl-5 in tissues such as the head. PcG proteins are not required to initiate repression, but to maintain it during later stages of development. The mes-2/mes-3/mes-6 complex may participate in the global inactivation of the X chromosomes in germline cells. This complex is required to exclude mes-4 from the inactivated X-chromosomes in germline cells. Required for small-RNA-induced H3K27 trimethylation. Involved in the negative regulation of lifespan in a germline-independent fashion. This chain is Histone-lysine N-methyltransferase mes-2, found in Caenorhabditis elegans.